Reading from the N-terminus, the 715-residue chain is Methionine--tRNA ligase (715 aa).

Positions 17-27 (PYANGPIHLGH) match the 'HIGH' region motif. C148, C151, C161, and C164 together coordinate Zn(2+). The short motif at 359–363 (KMSKS) is the 'KMSKS' region element. K362 provides a ligand contact to ATP. In terms of domain architecture, tRNA-binding spans 614 to 715 (DLSKVELRVG…KDAKPGDRLK (102 aa)).

The protein belongs to the class-I aminoacyl-tRNA synthetase family. MetG type 1 subfamily. As to quaternary structure, homodimer. Zn(2+) serves as cofactor.

The protein localises to the cytoplasm. The catalysed reaction is tRNA(Met) + L-methionine + ATP = L-methionyl-tRNA(Met) + AMP + diphosphate. Is required not only for elongation of protein synthesis but also for the initiation of all mRNA translation through initiator tRNA(fMet) aminoacylation. The protein is Methionine--tRNA ligase of Leptospira interrogans serogroup Icterohaemorrhagiae serovar Lai (strain 56601).